The primary structure comprises 412 residues: Argininosuccinate synthase (412 aa).

ATP-binding positions include 12–20 (AYSGGLDTS) and Ala39. L-citrulline contacts are provided by Tyr91 and Ser96. Gly121 provides a ligand contact to ATP. 3 residues coordinate L-aspartate: Thr123, Asn127, and Asp128. An L-citrulline-binding site is contributed by Asn127. 5 residues coordinate L-citrulline: Arg131, Ser180, Ser189, Glu265, and Tyr277.

The protein belongs to the argininosuccinate synthase family. Type 1 subfamily. In terms of assembly, homotetramer.

It localises to the cytoplasm. The catalysed reaction is L-citrulline + L-aspartate + ATP = 2-(N(omega)-L-arginino)succinate + AMP + diphosphate + H(+). It functions in the pathway amino-acid biosynthesis; L-arginine biosynthesis; L-arginine from L-ornithine and carbamoyl phosphate: step 2/3. The polypeptide is Argininosuccinate synthase (Pseudoalteromonas atlantica (strain T6c / ATCC BAA-1087)).